Consider the following 243-residue polypeptide: Protein IN2-1 homolog A (243 aa).

The region spanning 31–112 (GTTRLYICYF…YIDSHFEGPA (82 aa)) is the GST N-terminal domain. Glutathione contacts are provided by residues Lys-70, Val-84, and 96 to 97 (ES). Residues 117-240 (DPEKRQFADE…YLLDLAKTHL (124 aa)) enclose the GST C-terminal domain.

The protein belongs to the GST superfamily. HSP26 family.

This Oryza sativa subsp. japonica (Rice) protein is Protein IN2-1 homolog A.